A 150-amino-acid polypeptide reads, in one-letter code: 3-dehydroquinate dehydratase (150 aa).

The Proton acceptor role is filled by tyrosine 26. Residues asparagine 77, histidine 83, and aspartate 90 each contribute to the substrate site. Histidine 103 functions as the Proton donor in the catalytic mechanism. Residues 104–105 and arginine 114 contribute to the substrate site; that span reads LS.

It belongs to the type-II 3-dehydroquinase family. Homododecamer.

The catalysed reaction is 3-dehydroquinate = 3-dehydroshikimate + H2O. Its pathway is metabolic intermediate biosynthesis; chorismate biosynthesis; chorismate from D-erythrose 4-phosphate and phosphoenolpyruvate: step 3/7. Catalyzes a trans-dehydration via an enolate intermediate. The protein is 3-dehydroquinate dehydratase of Sodalis glossinidius (strain morsitans).